A 403-amino-acid chain; its full sequence is Phosphoglycerate kinase (403 aa).

Substrate contacts are provided by residues 22–24, Arg37, 60–63, Arg119, and Arg156; these read DLN and HLGR. Residues Lys206, Gly302, Glu333, and 359–362 contribute to the ATP site; that span reads GGDS.

It belongs to the phosphoglycerate kinase family. As to quaternary structure, monomer.

It is found in the cytoplasm. The catalysed reaction is (2R)-3-phosphoglycerate + ATP = (2R)-3-phospho-glyceroyl phosphate + ADP. It functions in the pathway carbohydrate degradation; glycolysis; pyruvate from D-glyceraldehyde 3-phosphate: step 2/5. This chain is Phosphoglycerate kinase, found in Streptomyces avermitilis (strain ATCC 31267 / DSM 46492 / JCM 5070 / NBRC 14893 / NCIMB 12804 / NRRL 8165 / MA-4680).